Consider the following 217-residue polypeptide: Enoyl-CoA-hydratase (217 aa).

It belongs to the enoyl-CoA hydratase/isomerase family.

The enzyme catalyses a (3S)-3-hydroxyacyl-CoA = a (2E)-enoyl-CoA + H2O. It carries out the reaction a 4-saturated-(3S)-3-hydroxyacyl-CoA = a (3E)-enoyl-CoA + H2O. It participates in antibiotic biosynthesis; vancomycin biosynthesis. In terms of biological role, involved in the biosynthesis of the nonproteinogenic amino acid monomer (S)-3,5-dihydroxyphenylglycine (Dpg) responsible of the production of vancomycin and teicoplanin antibiotics. Catalyzes the syn-addition of a water molecule across the double bond of a trans-2-enoyl-CoA thioester, resulting in the formation of a beta-hydroxyacyl-CoA thioester. Physiologically, DpgB could act as a dehydratase, facilitating the aromatization of the DPA-S-DgpA or DPA-S-CoA intermediate. This chain is Enoyl-CoA-hydratase (dpgB), found in Amycolatopsis orientalis (Nocardia orientalis).